Here is an 85-residue protein sequence, read N- to C-terminus: Putative defensin-like protein 142 (85 aa).

Residues 1–24 (MKKSFLFTFTVLTIFTILVIGVAP) form the signal peptide. Cystine bridges form between Cys-30–Cys-78, Cys-41–Cys-63, Cys-46–Cys-73, and Cys-50–Cys-75.

This sequence belongs to the DEFL family.

It localises to the secreted. This is Putative defensin-like protein 142 (LCR34) from Arabidopsis thaliana (Mouse-ear cress).